Consider the following 388-residue polypeptide: Transposase for insertion sequence element IS406 (388 aa).

This sequence belongs to the transposase mutator family.

Required for the transposition of the insertion element. This chain is Transposase for insertion sequence element IS406, found in Burkholderia multivorans (strain ATCC 17616 / 249).